We begin with the raw amino-acid sequence, 152 residues long: Ribosome maturation factor RimP (152 aa).

It belongs to the RimP family.

It localises to the cytoplasm. Its function is as follows. Required for maturation of 30S ribosomal subunits. This Pseudothermotoga lettingae (strain ATCC BAA-301 / DSM 14385 / NBRC 107922 / TMO) (Thermotoga lettingae) protein is Ribosome maturation factor RimP.